Reading from the N-terminus, the 229-residue chain is 3-isopropylmalate dehydratase small subunit (229 aa).

Residues 208-229 (KIESAREPDDDWTGPLADRGII) are disordered.

It belongs to the LeuD family. LeuD type 1 subfamily. As to quaternary structure, heterodimer of LeuC and LeuD.

It carries out the reaction (2R,3S)-3-isopropylmalate = (2S)-2-isopropylmalate. It functions in the pathway amino-acid biosynthesis; L-leucine biosynthesis; L-leucine from 3-methyl-2-oxobutanoate: step 2/4. Functionally, catalyzes the isomerization between 2-isopropylmalate and 3-isopropylmalate, via the formation of 2-isopropylmaleate. The sequence is that of 3-isopropylmalate dehydratase small subunit from Bifidobacterium longum subsp. infantis (strain ATCC 15697 / DSM 20088 / JCM 1222 / NCTC 11817 / S12).